We begin with the raw amino-acid sequence, 417 residues long: Zinc-finger homeodomain protein 4 (417 aa).

A compositionally biased stretch (polar residues) spans 1-12; sequence MVSILQLQTRTE. Disordered regions lie at residues 1 to 22 and 31 to 50; these read MVSI…ASAA and RQQQ…FQER. The segment covering 13 to 22 has biased composition (low complexity); sequence ASPASSASAA. Residues 36-46 show a composition bias toward acidic residues; the sequence is QEGEEEEEEFE. The ZF-HD dimerization-type; degenerate zinc-finger motif lies at 145-194; sequence YRECLKNHAAAIGGNATDGCGEFMPSGEEGSLEALKCSACGCHRNFHRKE. Disordered stretches follow at residues 281–309 and 361–417; these read DEMD…FRTK and NLAK…LKLE. Gly residues predominate over residues 286 to 298; that stretch reads SGGGGGVGRGGGS. Positions 303–366 form a DNA-binding region, homeobox; it reads KKRFRTKFTA…NNKHNLAKKP (64 aa). A compositionally biased stretch (pro residues) spans 368–417; the sequence is PSSPPPPPQIPPMSMPPSPPPPQIPPMSMPPSPPPMPMPMPPSPPQLKLE.

Homo- and heterodimer with other ZFHD proteins.

Its subcellular location is the nucleus. In terms of biological role, putative transcription factor. This chain is Zinc-finger homeodomain protein 4 (ZHD4), found in Oryza sativa subsp. japonica (Rice).